A 428-amino-acid chain; its full sequence is Cholecystokinin receptor type A (428 aa).

Topologically, residues 1-41 are extracellular; sequence MDVVDSLLVNGSNITPPCELGLENETLFCLDQPRPSKEWQP. 2 N-linked (GlcNAc...) asparagine glycosylation sites follow: N10 and N24. A disulfide bridge connects residues C18 and C29. The chain crosses the membrane as a helical span at residues 42–67; that stretch reads AVQILLYSLIFLLSVLGNTLVITVLI. The Cytoplasmic segment spans residues 68–77; the sequence is RNKRMRTVTN. The chain crosses the membrane as a helical span at residues 78–104; it reads IFLLSLAVSDLMLCLFCMPFNLIPNLL. Topologically, residues 105 to 115 are extracellular; sequence KDFIFGSAVCK. The cysteines at positions 114 and 196 are disulfide-linked. The helical transmembrane segment at 116–137 threads the bilayer; it reads TTTYFMGTSVSVSTFNLVAISL. Residues 138-157 lie on the Cytoplasmic side of the membrane; sequence ERYGAICKPLQSRVWQTKSH. The chain crosses the membrane as a helical span at residues 158–178; that stretch reads ALKVIAATWCLSFTIMTPYPI. Residues 179-210 are Extracellular-facing; it reads YSNLVPFTKNNNQTANMCRFLLPNDVMQQSWH. Residue N190 is glycosylated (N-linked (GlcNAc...) asparagine). Residues 211 to 234 traverse the membrane as a helical segment; that stretch reads TFLLLILFLIPGIVMMVAYGLISL. The Cytoplasmic segment spans residues 235–313; that stretch reads ELYQGIKFEA…NLMAKKRVIR (79 aa). The tract at residues 248–272 is disordered; the sequence is KSAKERKPSTTSSGKYEDSDGCYLQ. The chain crosses the membrane as a helical span at residues 314 to 334; sequence MLIVIVVLFFLCWMPIFSANA. At 335-349 the chain is on the extracellular side; the sequence is WRAYDTASAERRLSG. A helical transmembrane segment spans residues 350–373; it reads TPISFILLLSYTSSCVNPIIYCFM. The Cytoplasmic portion of the chain corresponds to 374-428; it reads NKRFRLGFMATFPCCPNPGPPGARGEVGEEEEGGTTGASLSRFSYSHMSASVPPQ. C387 carries S-palmitoyl cysteine lipidation. The interval 394–428 is disordered; sequence PGARGEVGEEEEGGTTGASLSRFSYSHMSASVPPQ. The segment covering 411-422 has biased composition (polar residues); it reads ASLSRFSYSHMS.

This sequence belongs to the G-protein coupled receptor 1 family.

Its subcellular location is the cell membrane. Functionally, receptor for cholecystokinin. Mediates pancreatic growth and enzyme secretion, smooth muscle contraction of the gall bladder and stomach. Has a 1000-fold higher affinity for CCK rather than for gastrin. It modulates feeding and dopamine-induced behavior in the central and peripheral nervous system. This receptor mediates its action by association with G proteins that activate a phosphatidylinositol-calcium second messenger system. In Homo sapiens (Human), this protein is Cholecystokinin receptor type A (CCKAR).